Here is a 278-residue protein sequence, read N- to C-terminus: Truncated FRIGIDA-like protein 1 (278 aa).

Positions 1 to 36 form a coiled coil; it reads MTASETIATAINQIDEKKEKLKKAFDDLQAHRSLLS.

This sequence belongs to the Frigida family.

Functionally, truncated inactive FRIGIDA-like 1 protein. The chain is Truncated FRIGIDA-like protein 1 (FRL1) from Arabidopsis thaliana (Mouse-ear cress).